A 58-amino-acid chain; its full sequence is uncharacterized protein (58 aa).

It localises to the plastid. It is found in the chloroplast. This is an uncharacterized protein from Porphyra purpurea (Red seaweed).